The following is a 397-amino-acid chain: MTASAPITQDVLTLPRKEPEGGKINLVGLTRDRMRAVLIENGTPEKQAKMRVGQIWQWIYQWGVRDFAEMTNLAKAYRAQLEETFEIRIPEVVSKQVSTDGTRKYLVRINGGHEVEVVYIPEDDRGTLCISSQVGCTLTCSFCHTGTQKLVRNLTPAEIIGQVMMARDDLEEWPTPGAPKDETRLLSNIVLMGMGEPLYNFDNVRDAMKIAMDPEGISLSRRRITLSTSGVVPEIARTAEEIGCLLAISFHATTNEVRDVLVPINRRWNIDELLQALADYPKVSNSERITFEYVMLDGVNDSDEDAHRLLDHIKRHNIPAKINLIPFNEWPGAPYKRSSNNRIRAFANIIYQAGYASPIRKTRGDDIMAACGQLKSATERARKSRKQIEAEAGVNNS.

The Proton acceptor role is filled by Glu-116. The Radical SAM core domain occupies Glu-122–Asp-366. Residues Cys-129 and Cys-371 are joined by a disulfide bond. Residues Cys-136, Cys-140, and Cys-143 each contribute to the [4Fe-4S] cluster site. Residues Gly-195 to Glu-196, Ser-227, Ser-249 to His-251, and Asn-328 contribute to the S-adenosyl-L-methionine site. Cys-371 (S-methylcysteine intermediate) is an active-site residue.

Belongs to the radical SAM superfamily. RlmN family. The cofactor is [4Fe-4S] cluster.

The protein resides in the cytoplasm. The catalysed reaction is adenosine(2503) in 23S rRNA + 2 reduced [2Fe-2S]-[ferredoxin] + 2 S-adenosyl-L-methionine = 2-methyladenosine(2503) in 23S rRNA + 5'-deoxyadenosine + L-methionine + 2 oxidized [2Fe-2S]-[ferredoxin] + S-adenosyl-L-homocysteine. It catalyses the reaction adenosine(37) in tRNA + 2 reduced [2Fe-2S]-[ferredoxin] + 2 S-adenosyl-L-methionine = 2-methyladenosine(37) in tRNA + 5'-deoxyadenosine + L-methionine + 2 oxidized [2Fe-2S]-[ferredoxin] + S-adenosyl-L-homocysteine. Its function is as follows. Specifically methylates position 2 of adenine 2503 in 23S rRNA and position 2 of adenine 37 in tRNAs. m2A2503 modification seems to play a crucial role in the proofreading step occurring at the peptidyl transferase center and thus would serve to optimize ribosomal fidelity. This chain is Dual-specificity RNA methyltransferase RlmN, found in Ruegeria sp. (strain TM1040) (Silicibacter sp.).